The chain runs to 677 residues: Penicillin-binding protein activator LpoA (677 aa).

The signal sequence occupies residues 1–26 (MLPSKIVRHKAGRFVPVLLAGLILAA). Cys27 carries the N-palmitoyl cysteine lipid modification. Residue Cys27 is the site of S-diacylglycerol cysteine attachment. Positions 309–359 (QPADANAVVSPSANPAAAQQSGTAQQPATTQQQPQQQPAAEPASNAQVKVY) are disordered. Residues 313–355 (ANAVVSPSANPAAAQQSGTAQQPATTQQQPQQQPAAEPASNAQ) show a composition bias toward low complexity.

This sequence belongs to the LpoA family. As to quaternary structure, interacts with PBP1a.

It is found in the cell outer membrane. In terms of biological role, regulator of peptidoglycan synthesis that is essential for the function of penicillin-binding protein 1A (PBP1a). The chain is Penicillin-binding protein activator LpoA from Pantoea ananatis (strain LMG 20103).